A 260-amino-acid chain; its full sequence is Kallikrein-8 (260 aa).

Positions Met-1 to Ala-28 are cleaved as a signal peptide. Residues Gln-29–Lys-32 constitute a propeptide that is removed on maturation. Positions Ile-33–Asp-257 constitute a Peptidase S1 domain. Intrachain disulfides connect Cys-39–Cys-173, Cys-58–Cys-74, Cys-145–Cys-246, Cys-152–Cys-218, Cys-184–Cys-198, and Cys-208–Cys-233. Catalysis depends on His-73, which acts as the Charge relay system. N-linked (GlcNAc...) asparagine glycosylation occurs at Asn-110. The Charge relay system role is filled by Asp-120. Ser-212 functions as the Charge relay system in the catalytic mechanism.

It belongs to the peptidase S1 family. Kallikrein subfamily. Interacts with SPINK9. As to expression, expressed in the limbic system of mouse brain and is localized at highest concentration in pyramidal neurons of the hippocampal CA1-3 subfields. Also detected in spinal cord gray matter and in keratinized stratified epithelia of epidermis, hair, tongue, palate, nasal cavity, pharynges, esophagus and forestomach. In skin and mucus membranes, expressed in stratum spinosum and stratum granulosum. Expressed during estrus in vaginal epithelial cells but not stromal cells. Within the vaginal epithelium, expressed in prickle cells, granular cells and parakeratotic cells but not in basal cells. Not expressed in uterus. Expressed in the keratinocytes.

The protein localises to the secreted. The protein resides in the cytoplasm. It catalyses the reaction Cleavage of amide substrates following the basic amino acids Arg or Lys at the P1 position, with a preference for Arg over Lys.. Its activity is regulated as follows. Strongly inhibited by diisopropyl fluorophosphate, leupeptin and (4-amidinophenyl)methanesulfonyl 1-fluoride. Serine protease which is capable of degrading a number of proteins such as casein, fibrinogen, kininogen, fibronectin and collagen type IV. Also cleaves L1CAM in response to increased neural activity. Induces neurite outgrowth and fasciculation of cultured hippocampal neurons. Plays a role in the formation and maturation of orphan and small synaptic boutons in the Schaffer-collateral pathway, regulates Schaffer-collateral long-term potentiation in the hippocampus and is required for memory acquisition and synaptic plasticity. Involved in skin desquamation and keratinocyte proliferation. Plays a role in the secondary phase of pathogenesis following spinal cord injury. The polypeptide is Kallikrein-8 (Klk8) (Mus musculus (Mouse)).